The chain runs to 493 residues: Galactose-1-phosphate uridylyltransferase (493 aa).

This sequence belongs to the galactose-1-phosphate uridylyltransferase type 2 family.

The protein resides in the cytoplasm. It carries out the reaction alpha-D-galactose 1-phosphate + UDP-alpha-D-glucose = alpha-D-glucose 1-phosphate + UDP-alpha-D-galactose. The protein operates within carbohydrate metabolism; galactose metabolism. The sequence is that of Galactose-1-phosphate uridylyltransferase from Streptococcus pneumoniae serotype 19F (strain G54).